The sequence spans 226 residues: Biosynthetic peptidoglycan transglycosylase (226 aa).

Residues 5 to 25 (IGVTVLAVVGLLLLPYLLTPL) traverse the membrane as a helical segment.

This sequence belongs to the glycosyltransferase 51 family.

The protein localises to the cell inner membrane. It carries out the reaction [GlcNAc-(1-&gt;4)-Mur2Ac(oyl-L-Ala-gamma-D-Glu-L-Lys-D-Ala-D-Ala)](n)-di-trans,octa-cis-undecaprenyl diphosphate + beta-D-GlcNAc-(1-&gt;4)-Mur2Ac(oyl-L-Ala-gamma-D-Glu-L-Lys-D-Ala-D-Ala)-di-trans,octa-cis-undecaprenyl diphosphate = [GlcNAc-(1-&gt;4)-Mur2Ac(oyl-L-Ala-gamma-D-Glu-L-Lys-D-Ala-D-Ala)](n+1)-di-trans,octa-cis-undecaprenyl diphosphate + di-trans,octa-cis-undecaprenyl diphosphate + H(+). The protein operates within cell wall biogenesis; peptidoglycan biosynthesis. Peptidoglycan polymerase that catalyzes glycan chain elongation from lipid-linked precursors. This is Biosynthetic peptidoglycan transglycosylase from Nitrobacter hamburgensis (strain DSM 10229 / NCIMB 13809 / X14).